The sequence spans 227 residues: Probable FKBP-type 25 kDa peptidyl-prolyl cis-trans isomerase (227 aa).

A PPIase FKBP-type domain is found at 144–227; the sequence is ATQVHVRYRG…VFEIDLLGFR (84 aa).

This sequence belongs to the FKBP-type PPIase family.

The enzyme catalyses [protein]-peptidylproline (omega=180) = [protein]-peptidylproline (omega=0). In terms of biological role, PPIases accelerate the folding of proteins. The sequence is that of Probable FKBP-type 25 kDa peptidyl-prolyl cis-trans isomerase (fkl) from Pseudomonas aeruginosa (strain ATCC 15692 / DSM 22644 / CIP 104116 / JCM 14847 / LMG 12228 / 1C / PRS 101 / PAO1).